Reading from the N-terminus, the 659-residue chain is Checkpoint protein RAD24 (659 aa).

Residues 24–54 (TKWSSSRPTSPVRKARSTENDFLSKQDTSSI) form a disordered region. 109–116 (GPSGCSKS) lines the ATP pocket. The segment covering 596 to 612 (EDEETSFNDDPIVDSDS) has biased composition (acidic residues). The tract at residues 596–659 (EDEETSFNDD…SLSDSDLEIL (64 aa)) is disordered. 2 positions are modified to phosphoserine: Ser652 and Ser654.

This sequence belongs to the rad17/RAD24 family. Component of the RAD24-RFC complex which consists of RAD14, RFC2, RFC3, RFC4 and RFC5 and associates with the checkpoint clamp DDC1:MEC3:RAD17 complex. RAD24 interacts with ECO1.

The protein resides in the nucleus. Its function is as follows. Participates in checkpoint pathways arrest of the cell cycle, a mechanism that allows the DNA repair pathways to act to restore the integrity of the DNA prior to DNA synthesis or separation of the replicated chromosomes. Regulates the DNA damage checkpoint pathway throughout the cell cycle, when associated with RCF5. Component of the RFC-like RAD24-RFC complex which loads the checkpoint clamp DDC1:MEC3:RAD17 complex and is involved in DNA repair pathways. During a clamp loading circle, the RFC:clamp complex binds to DNA and the recognition of the double-stranded/single-stranded junction stimulates ATP hydrolysis by RFC. The complex presumably provides bipartite ATP sites in which one subunit supplies a catalytic site for hydrolysis of ATP bound to the neighboring subunit. Dissociation of RFC from the clamp leaves the clamp encircling DNA. The chain is Checkpoint protein RAD24 (RAD24) from Saccharomyces cerevisiae (strain ATCC 204508 / S288c) (Baker's yeast).